A 547-amino-acid chain; its full sequence is Cilia- and flagella- associated protein 210 (547 aa).

Coiled-coil stretches lie at residues 50–131 (ERIR…RKKA), 183–251 (VKLN…MKKN), and 342–405 (IARD…KADK). Positions 214–237 (KQIEEHKEEEEARKKSEEKDAEEM) are disordered.

In terms of assembly, microtubule inner protein component of sperm flagellar doublet microtubules.

The protein localises to the cytoplasm. Its subcellular location is the cytoskeleton. It is found in the cilium axoneme. It localises to the flagellum axoneme. Microtubule inner protein (MIP) part of the dynein-decorated doublet microtubules (DMTs) in cilia axoneme, which is required for motile cilia beating. The polypeptide is Cilia- and flagella- associated protein 210 (Cfap210) (Mus musculus (Mouse)).